Consider the following 432-residue polypeptide: Serine--tRNA ligase (432 aa).

230 to 232 provides a ligand contact to L-serine; sequence TAE. 261–263 contacts ATP; sequence RSE. E284 contacts L-serine. 348–351 contacts ATP; sequence EVSS. L-serine is bound at residue S383.

This sequence belongs to the class-II aminoacyl-tRNA synthetase family. Type-1 seryl-tRNA synthetase subfamily. As to quaternary structure, homodimer. The tRNA molecule binds across the dimer.

The protein resides in the cytoplasm. The enzyme catalyses tRNA(Ser) + L-serine + ATP = L-seryl-tRNA(Ser) + AMP + diphosphate + H(+). It carries out the reaction tRNA(Sec) + L-serine + ATP = L-seryl-tRNA(Sec) + AMP + diphosphate + H(+). The protein operates within aminoacyl-tRNA biosynthesis; selenocysteinyl-tRNA(Sec) biosynthesis; L-seryl-tRNA(Sec) from L-serine and tRNA(Sec): step 1/1. Catalyzes the attachment of serine to tRNA(Ser). Is also able to aminoacylate tRNA(Sec) with serine, to form the misacylated tRNA L-seryl-tRNA(Sec), which will be further converted into selenocysteinyl-tRNA(Sec). This chain is Serine--tRNA ligase, found in Limosilactobacillus fermentum (strain NBRC 3956 / LMG 18251) (Lactobacillus fermentum).